The chain runs to 66 residues: UPF0337 protein pc0632 (66 aa).

The protein belongs to the UPF0337 (CsbD) family.

In Protochlamydia amoebophila (strain UWE25), this protein is UPF0337 protein pc0632.